We begin with the raw amino-acid sequence, 145 residues long: MSMAYEEYMRQVVLPMRQELTDAGFKELTTAEAVEDYIADAEGTTLVFINSVCGCAAGLARPAAIYSLQHDHTPDHLVTVFAGQDKEATAAMRSKFPDYPPSSPSMALLKGTEVVHFIPREDIEGAEPEAIVRNLALAYNEHCQK.

The protein belongs to the bacilliredoxin family.

This chain is Bacilliredoxin ABC2045, found in Shouchella clausii (strain KSM-K16) (Alkalihalobacillus clausii).